A 248-amino-acid chain; its full sequence is Adenylate kinase (248 aa).

An ATP-binding site is contributed by 37 to 42; sequence GAGKGT. Positions 57 to 86 are NMP; sequence SPGNLLREEMNRNSPITAQIKDYVSKGQLV. AMP contacts are provided by residues Arg63, 84-86, 111-114, and Gln118; these read QLV and GFPR. Residues 149-181 are LID; the sequence is GRRFDPITGNTYHIIYDPPPPDIADRVVVRTDD. Position 150 (Arg150) interacts with ATP. Residues Arg178 and Arg189 each contribute to the AMP site.

This sequence belongs to the adenylate kinase family. In terms of assembly, monomer.

Its subcellular location is the cytoplasm. The enzyme catalyses AMP + ATP = 2 ADP. In terms of biological role, catalyzes the reversible transfer of the terminal phosphate group between ATP and AMP. Plays an important role in cellular energy homeostasis and in adenine nucleotide metabolism. The sequence is that of Adenylate kinase from Giardia intestinalis (Giardia lamblia).